The primary structure comprises 237 residues: Uridylate kinase (237 aa).

Residue 12–15 (KLSG) participates in ATP binding. Residues 20–25 (GDEGFG) are involved in allosteric activation by GTP. A UMP-binding site is contributed by G54. ATP is bound by residues G55 and R59. UMP contacts are provided by residues D74 and 135 to 142 (TGSPFFTT). Positions 162, 168, and 171 each coordinate ATP.

It belongs to the UMP kinase family. As to quaternary structure, homohexamer.

The protein localises to the cytoplasm. The catalysed reaction is UMP + ATP = UDP + ADP. The protein operates within pyrimidine metabolism; CTP biosynthesis via de novo pathway; UDP from UMP (UMPK route): step 1/1. Its activity is regulated as follows. Allosterically activated by GTP. Inhibited by UTP. In terms of biological role, catalyzes the reversible phosphorylation of UMP to UDP. This Actinobacillus pleuropneumoniae serotype 5b (strain L20) protein is Uridylate kinase.